Reading from the N-terminus, the 148-residue chain is Large ribosomal subunit protein uL11 (148 aa).

Residues 89-108 (EKKKGSGAHKPGKEKVGQVT) are disordered.

It belongs to the universal ribosomal protein uL11 family. As to quaternary structure, part of the ribosomal stalk of the 50S ribosomal subunit. Interacts with L10 and the large rRNA to form the base of the stalk. L10 forms an elongated spine to which L12 dimers bind in a sequential fashion forming a multimeric L10(L12)X complex. In terms of processing, one or more lysine residues are methylated.

Its function is as follows. Forms part of the ribosomal stalk which helps the ribosome interact with GTP-bound translation factors. The polypeptide is Large ribosomal subunit protein uL11 (Anaeromyxobacter dehalogenans (strain 2CP-1 / ATCC BAA-258)).